Consider the following 193-residue polypeptide: Imidazoleglycerol-phosphate dehydratase (193 aa).

This sequence belongs to the imidazoleglycerol-phosphate dehydratase family.

Its subcellular location is the cytoplasm. It carries out the reaction D-erythro-1-(imidazol-4-yl)glycerol 3-phosphate = 3-(imidazol-4-yl)-2-oxopropyl phosphate + H2O. The protein operates within amino-acid biosynthesis; L-histidine biosynthesis; L-histidine from 5-phospho-alpha-D-ribose 1-diphosphate: step 6/9. The chain is Imidazoleglycerol-phosphate dehydratase from Methanoculleus marisnigri (strain ATCC 35101 / DSM 1498 / JR1).